The primary structure comprises 338 residues: Ketol-acid reductoisomerase (NADP(+)) (338 aa).

The region spanning 1–181 (MKVYYDKDAD…GGTKGGVIET (181 aa)) is the KARI N-terminal Rossmann domain. Residues 24–27 (YGSQ), Arg47, Ser52, and 82–85 (DESQ) each bind NADP(+). His107 is an active-site residue. Gly133 contributes to the NADP(+) binding site. The region spanning 182–327 (NFREETETDL…AELRAMMPWI (146 aa)) is the KARI C-terminal knotted domain. Mg(2+) is bound by residues Asp190, Glu194, Glu226, and Glu230. Ser251 serves as a coordination point for substrate.

The protein belongs to the ketol-acid reductoisomerase family. Requires Mg(2+) as cofactor.

It catalyses the reaction (2R)-2,3-dihydroxy-3-methylbutanoate + NADP(+) = (2S)-2-acetolactate + NADPH + H(+). It carries out the reaction (2R,3R)-2,3-dihydroxy-3-methylpentanoate + NADP(+) = (S)-2-ethyl-2-hydroxy-3-oxobutanoate + NADPH + H(+). Its pathway is amino-acid biosynthesis; L-isoleucine biosynthesis; L-isoleucine from 2-oxobutanoate: step 2/4. It participates in amino-acid biosynthesis; L-valine biosynthesis; L-valine from pyruvate: step 2/4. Its function is as follows. Involved in the biosynthesis of branched-chain amino acids (BCAA). Catalyzes an alkyl-migration followed by a ketol-acid reduction of (S)-2-acetolactate (S2AL) to yield (R)-2,3-dihydroxy-isovalerate. In the isomerase reaction, S2AL is rearranged via a Mg-dependent methyl migration to produce 3-hydroxy-3-methyl-2-ketobutyrate (HMKB). In the reductase reaction, this 2-ketoacid undergoes a metal-dependent reduction by NADPH to yield (R)-2,3-dihydroxy-isovalerate. This Chromobacterium violaceum (strain ATCC 12472 / DSM 30191 / JCM 1249 / CCUG 213 / NBRC 12614 / NCIMB 9131 / NCTC 9757 / MK) protein is Ketol-acid reductoisomerase (NADP(+)).